The following is a 127-amino-acid chain: Phosphoribosyl-AMP cyclohydrolase (127 aa).

Aspartate 96 is a binding site for Mg(2+). Residue cysteine 97 coordinates Zn(2+). The Mg(2+) site is built by aspartate 98 and aspartate 100. Zn(2+) is bound by residues cysteine 113 and cysteine 120.

The protein belongs to the PRA-CH family. Homodimer. Requires Mg(2+) as cofactor. The cofactor is Zn(2+).

It localises to the cytoplasm. It carries out the reaction 1-(5-phospho-beta-D-ribosyl)-5'-AMP + H2O = 1-(5-phospho-beta-D-ribosyl)-5-[(5-phospho-beta-D-ribosylamino)methylideneamino]imidazole-4-carboxamide. The protein operates within amino-acid biosynthesis; L-histidine biosynthesis; L-histidine from 5-phospho-alpha-D-ribose 1-diphosphate: step 3/9. Its function is as follows. Catalyzes the hydrolysis of the adenine ring of phosphoribosyl-AMP. This is Phosphoribosyl-AMP cyclohydrolase from Corynebacterium jeikeium (strain K411).